A 677-amino-acid polypeptide reads, in one-letter code: MQPAMLLGLLGAAALAAVSSAPVDNRDHNEEMVTRCIIEVLSNALSKSSVPTITPECRQVLKKSGKEVKGEEKGENQNSKFEVRLLRDPADASGTRWASSREDAGAPVEDSQGQTKVGNEKWTEGGGHSREGVDDQESLRPSNQQASKEAKIYHSEERVGKEREKEEGKIYPMGEHREDAGEEKKHIEDSGEKPNTFSNKRSEASAKKKDESVARADAHSMELEEKTHSREQSSQESGEETRRQEKPQELTDQDQSQEESQEGEEGEEGEEGEEGEEDSASEVTKRRPRHHHGRSGSNKSSYEGHPLSEERRPSPKESKEADVATVRLGEKRSHHLAHYRASEEEPEYGEESRSYRGLQYRGRGSEEDRAPRPRSEESQEREYKRNHPDSELESTANRHGEETEEERSYEGANGRQHRGRGREPGAHSALDTREEKRLLDEGHYPVRESPIDTAKRYPQSKWQEQEKNYLNYGEEGDQGRWWQQEEQLGPEESREEVRFPDRQYEPYPITEKRKRLGALFNPYFDPLQWKNSDFEKRGNPDDSFLEDEGEDRNGVTLTEKNSFPEYNYDWWERRPFSEDVNWGYEKRSFARAPQLDLKRQYDGVAELDQLLHYRKKADEFPDFYDSEEQMGPHQEANDEKARADQRVLTAEEKKELENLAAMDLELQKIAEKFSQRG.

The N-terminal stretch at methionine 1–serine 20 is a signal peptide. Cysteine 36 and cysteine 57 are disulfide-bonded. Disordered regions lie at residues lysine 63–glutamate 505 and asparagine 531–threonine 558. Residues serine 64–alanine 90 show a composition bias toward basic and acidic residues. Residues serine 93, serine 99, and serine 100 each carry the phosphoserine modification. O-linked (Xyl...) (chondroitin sulfate) serine glycosylation is present at serine 93. O-linked (GalNAc...) threonine glycosylation occurs at threonine 115. Over residues glycine 118 to valine 133 the composition is skewed to basic and acidic residues. Residues serine 129, serine 147, serine 190, and serine 220 each carry the phosphoserine modification. Composition is skewed to basic and acidic residues over residues lysine 148 to glutamate 192 and lysine 200 to glutamate 249. An O-linked (Xyl...) (chondroitin sulfate) serine glycan is attached at serine 237. Residues threonine 251–alanine 280 show a composition bias toward acidic residues. 6 positions are modified to phosphoserine: serine 256, serine 260, serine 300, serine 301, serine 318, and serine 342. A compositionally biased stretch (basic and acidic residues) spans proline 306–aspartate 322. Tyrosine 348 carries the post-translational modification Sulfotyrosine. Composition is skewed to basic and acidic residues over residues arginine 363–tyrosine 409 and glycine 421–lysine 455. Phosphoserine is present on residues serine 365, serine 375, and serine 378. Tyrosine 472 bears the Sulfotyrosine mark. Over residues glutamate 491–tyrosine 504 the composition is skewed to basic and acidic residues. Residues serine 493, serine 532, and serine 543 each carry the phosphoserine modification. A sulfotyrosine mark is found at tyrosine 566 and tyrosine 624. The tract at residues aspartate 622–arginine 646 is disordered. Position 626 is a phosphoserine (serine 626). Over residues glutamate 635–arginine 646 the composition is skewed to basic and acidic residues.

Belongs to the chromogranin/secretogranin protein family. In terms of assembly, interacts with ITPR1 in the secretory granules.

The protein localises to the secreted. Functionally, secretogranin-1 is a neuroendocrine secretory granule protein, which may be the precursor for other biologically active peptides. The sequence is that of Secretogranin-1 (Chgb) from Mus musculus (Mouse).